A 188-amino-acid polypeptide reads, in one-letter code: Ribosome-recycling factor (188 aa).

It belongs to the RRF family.

Its subcellular location is the cytoplasm. Its function is as follows. Responsible for the release of ribosomes from messenger RNA at the termination of protein biosynthesis. May increase the efficiency of translation by recycling ribosomes from one round of translation to another. The polypeptide is Ribosome-recycling factor (Anaeromyxobacter dehalogenans (strain 2CP-1 / ATCC BAA-258)).